Reading from the N-terminus, the 859-residue chain is Cadherin-related family member 1 (859 aa).

A signal peptide spans 1-21 (MRRGPRVALVLGLLRIYLAQA). Over 22 to 701 (NFAPHFFDNG…LIQTKDNPMK (680 aa)) the chain is Extracellular. 6 consecutive Cadherin domains span residues 36-135 (NGNM…APRF), 136-247 (IQEP…APIF), 248-354 (VGTP…PPTF), 360-473 (PQNK…VPKF), 474-577 (TSHY…YPQF), and 569-691 (DVND…MAAF). Residues Asn58 and Asn89 are each glycosylated (N-linked (GlcNAc...) asparagine). Residue Asn288 is glycosylated (N-linked (GlcNAc...) asparagine). The chain crosses the membrane as a helical span at residues 702–722 (AVGVLAGVMAIVVAITVLIST). Residues 723 to 859 (ATFWRNKKSN…KKSLDNKAYI (137 aa)) lie on the Cytoplasmic side of the membrane. The segment at 793 to 838 (PALPPPPKMASSMVAQQTVPTVSGSLTPQPSPQLPTPKTLGGPVQS) is disordered. Residues 805–816 (MVAQQTVPTVSG) show a composition bias toward polar residues.

Interacts with PROM1. Undergoes proteolytic cleavage; produces a soluble 95 kDa N-terminal fragment and a 25 kDa cell-associated C-terminal fragment. As to expression, expressed in cone and rod photoreceptor cells (at protein level). Expressed in photoreceptor cells of the outer nuclear layer of the retina. Expressed in mitral and tufted cells in the olfactory bulb.

The protein resides in the cell membrane. In terms of biological role, potential calcium-dependent cell-adhesion protein. May be required for the structural integrity of the outer segment (OS) of photoreceptor cells. This Mus musculus (Mouse) protein is Cadherin-related family member 1 (Cdhr1).